The primary structure comprises 213 residues: MSRQLSRTDNLIHQFDTILRTLVPHAATASRANPAAGTQDKAMSDAERRHAAGLMRINHTGEVCAQALYQGQGLTAKLHETRDQMEQAAAEEIDHLAWCDERLRELDSRTSYLNPAFYAASFGMGALAGKLGDNISLGFVAATEEQVGRHLDDHMHKLPMGDRRSRAVLEQMRTDEAHHERWALEAGGARFPAPLKLGMRLMSKVMTKSVYTL.

Fe cation is bound by residues Glu62, Glu92, His95, Glu144, Glu176, and His179.

The protein belongs to the COQ7 family. Fe cation serves as cofactor.

Its subcellular location is the cell membrane. The catalysed reaction is a 5-methoxy-2-methyl-3-(all-trans-polyprenyl)benzene-1,4-diol + AH2 + O2 = a 3-demethylubiquinol + A + H2O. It functions in the pathway cofactor biosynthesis; ubiquinone biosynthesis. Catalyzes the hydroxylation of 2-nonaprenyl-3-methyl-6-methoxy-1,4-benzoquinol during ubiquinone biosynthesis. This is 3-demethoxyubiquinol 3-hydroxylase from Chromohalobacter salexigens (strain ATCC BAA-138 / DSM 3043 / CIP 106854 / NCIMB 13768 / 1H11).